Reading from the N-terminus, the 448-residue chain is Phosphoglucosamine mutase (448 aa).

Serine 102 serves as the catalytic Phosphoserine intermediate. 4 residues coordinate Mg(2+): serine 102, aspartate 243, aspartate 245, and aspartate 247. Serine 102 carries the post-translational modification Phosphoserine.

It belongs to the phosphohexose mutase family. Requires Mg(2+) as cofactor. Post-translationally, activated by phosphorylation.

The enzyme catalyses alpha-D-glucosamine 1-phosphate = D-glucosamine 6-phosphate. In terms of biological role, catalyzes the conversion of glucosamine-6-phosphate to glucosamine-1-phosphate. The sequence is that of Phosphoglucosamine mutase from Parvibaculum lavamentivorans (strain DS-1 / DSM 13023 / NCIMB 13966).